We begin with the raw amino-acid sequence, 209 residues long: Uracil phosphoribosyltransferase (209 aa).

5-phospho-alpha-D-ribose 1-diphosphate is bound by residues Arg79, Arg104, and 131-139 (DPMLATGGS). Uracil is bound by residues Ile194 and 199–201 (GDA). 5-phospho-alpha-D-ribose 1-diphosphate is bound at residue Asp200.

It belongs to the UPRTase family. In terms of assembly, homodimer. Requires Mg(2+) as cofactor.

The catalysed reaction is UMP + diphosphate = 5-phospho-alpha-D-ribose 1-diphosphate + uracil. It participates in pyrimidine metabolism; UMP biosynthesis via salvage pathway; UMP from uracil: step 1/1. Allosterically activated by GTP. Functionally, catalyzes the conversion of uracil and 5-phospho-alpha-D-ribose 1-diphosphate (PRPP) to UMP and diphosphate. The chain is Uracil phosphoribosyltransferase from Bacillus caldolyticus.